A 555-amino-acid chain; its full sequence is CTL-like protein DDB_G0274487 (555 aa).

Over residues 1-17 (MGIEDNSQQPNTGSPYG) the composition is skewed to polar residues. Residues 1-101 (MGIEDNSQQP…NLNKANDRES (101 aa)) are disordered. Over residues 19–63 (SPPSQYNPYGQQPPQQQQYNPYGEQQQQPQQQQQYGYQPQFQPTY) the composition is skewed to low complexity. A compositionally biased stretch (pro residues) spans 79 to 90 (PFPPQQQQPPPI). N-linked (GlcNAc...) asparagine glycosylation is present at asparagine 116. The chain crosses the membrane as a helical span at residues 138–158 (IWFSILFGLNFGLLIVVSASA). Asparagine 174 is a glycosylation site (N-linked (GlcNAc...) asparagine). Transmembrane regions (helical) follow at residues 182 to 202 (FLFA…WAWL), 210 to 230 (ESLI…YCVF), 231 to 251 (FFVW…FFII), 284 to 304 (AGYV…SAFA), 313 to 333 (AIQT…FHVI), 340 to 360 (TVSG…VGMP), 372 to 392 (LTTS…IETL), 405 to 425 (VVVK…SSIV), 472 to 492 (IAIG…LISI), and 493 to 513 (PFDM…LVII).

It belongs to the CTL (choline transporter-like) family.

The protein resides in the membrane. The protein is CTL-like protein DDB_G0274487 of Dictyostelium discoideum (Social amoeba).